A 211-amino-acid chain; its full sequence is Protein-methionine-sulfoxide reductase heme-binding subunit MsrQ (211 aa).

Transmembrane regions (helical) follow at residues 17–37 (LAGLLPFLWLVWAINHGGLGA), 82–102 (LWCFAWATLHLTSYALLELGV), 116–136 (PYLTLGIISWVILLALAFTST), and 153–173 (FVYLVAILAPIHYLWSVKIIS).

This sequence belongs to the MsrQ family. In terms of assembly, heterodimer of a catalytic subunit (MsrP) and a heme-binding subunit (MsrQ). FMN serves as cofactor. The cofactor is heme b.

It is found in the cell inner membrane. Its function is as follows. Part of the MsrPQ system that repairs oxidized periplasmic proteins containing methionine sulfoxide residues (Met-O), using respiratory chain electrons. Thus protects these proteins from oxidative-stress damage caused by reactive species of oxygen and chlorine generated by the host defense mechanisms. MsrPQ is essential for the maintenance of envelope integrity under bleach stress, rescuing a wide series of structurally unrelated periplasmic proteins from methionine oxidation, including the primary periplasmic chaperone SurA and the lipoprotein Pal. MsrQ provides electrons for reduction to the reductase catalytic subunit MsrP, using the quinone pool of the respiratory chain. The chain is Protein-methionine-sulfoxide reductase heme-binding subunit MsrQ from Shigella boydii serotype 18 (strain CDC 3083-94 / BS512).